The chain runs to 156 residues: Large ribosomal subunit protein uL15 (156 aa).

The interval 1 to 48 (MKLHDLKPTPGSRKDRKRVGRGPGGTDKTAGRGHKGQKSRSGAGKGAF) is disordered.

Belongs to the universal ribosomal protein uL15 family. Part of the 50S ribosomal subunit. Contacts proteins L4, L21 and L35.

In terms of biological role, binds to the 23S rRNA. In Deinococcus radiodurans (strain ATCC 13939 / DSM 20539 / JCM 16871 / CCUG 27074 / LMG 4051 / NBRC 15346 / NCIMB 9279 / VKM B-1422 / R1), this protein is Large ribosomal subunit protein uL15 (rplO).